The following is a 128-amino-acid chain: Large ribosomal subunit protein eL22 (128 aa).

T62 carries the phosphothreonine modification. S66 carries the phosphoserine modification. Position 69 is an N6-succinyllysine (K69).

The protein belongs to the eukaryotic ribosomal protein eL22 family. In terms of assembly, component of the large ribosomal subunit.

The protein localises to the cytoplasm. Component of the large ribosomal subunit. The ribosome is a large ribonucleoprotein complex responsible for the synthesis of proteins in the cell. The chain is Large ribosomal subunit protein eL22 (Rpl22) from Rattus norvegicus (Rat).